The following is a 272-amino-acid chain: Serine/arginine-rich splicing factor 5 (272 aa).

Residues Cys4–Ala74 enclose the RRM 1 domain. The tract at residues Arg73–Arg105 is disordered. Over residues Ala74–Gly83 the composition is skewed to basic residues. Ser86 bears the Phosphoserine mark. An RRM 2 domain is found at Asn108–Lys181. Lys167 is subject to N6-acetyllysine. The interval Ile174–Asn272 is disordered. Positions Arg182–Ser229 are enriched in basic residues. Phosphoserine occurs at positions 227, 229, 233, 250, and 253. Residues Arg242–Val254 are compositionally biased toward low complexity.

The protein belongs to the splicing factor SR family. As to quaternary structure, interacts (via RS domain) with PHF5A (via N-terminus). Found in a pre-mRNA splicing complex with SRSF4/SFRS4, SRSF5/SFRS5, SNRNP70, SNRPA1, SRRM1 and SRRM2. Post-translationally, extensively phosphorylated on serine residues in the RS domain.

The protein localises to the nucleus. In terms of biological role, plays a role in constitutive splicing and can modulate the selection of alternative splice sites. This Homo sapiens (Human) protein is Serine/arginine-rich splicing factor 5 (SRSF5).